The chain runs to 344 residues: Ureide permease 3 (344 aa).

Residues 1–10 are Extracellular-facing; that stretch reads MYVIESKGGT. A helical transmembrane segment spans residues 11–31; the sequence is ITCMLLALLFLGTWPAIMTLT. Topologically, residues 32-42 are cytoplasmic; the sequence is ERRGRLPQHTY. A helical membrane pass occupies residues 43–63; that stretch reads LDYTLTNLLAAVIIAFTLGEI. Topologically, residues 64-78 are extracellular; sequence SPSRPNFTTQLSQDN. Residues 79–99 form a helical membrane-spanning segment; that stretch reads WPSVMFAMAGGIFLSLGTLAT. At 100-101 the chain is on the cytoplasmic side; it reads QY. A helical transmembrane segment spans residues 102–122; the sequence is AWAFVGLSVTEVITASIAVVI. The Extracellular segment spans residues 123-136; it reads GTTLNYFLDDRINR. Residues 137–157 form a helical membrane-spanning segment; the sequence is AEVLFPGVACFLIAVCFGSAV. The Cytoplasmic portion of the chain corresponds to 158–208; that stretch reads HKSNAADNKSKLQGFKSLETTSSFQMETSSIKEGKAKVGTADFLIEVEKQR. Position 209-216 (209-216) interacts with ATP; that stretch reads AIKVFGKS. A helical transmembrane segment spans residues 209–229; the sequence is AIKVFGKSTIIGLAITFFAVP. Topologically, residues 230–235 are extracellular; sequence KLNVYT. The chain crosses the membrane as a helical span at residues 236-256; that stretch reads AFFYFSISSFGVGLILNIIFL. Residues 257 to 278 are Cytoplasmic-facing; the sequence is YWPILGLPRSSFKAYLNDWNGR. The chain crosses the membrane as a helical span at residues 279-299; the sequence is GWSFLAGFLCGFGNGLQFMGG. Topologically, residues 300 to 344 are extracellular; the sequence is QAAGYAAAGAVQIENKHFGGYCCLENTKDHQEKHIHFLSVCYLCS.

This sequence belongs to the plant ureide permease (TC 2.A.7.19) family.

Its subcellular location is the membrane. Its function is as follows. Proton-coupled transporter that transports a wide spectrum of oxo derivatives of heterocyclic nitrogen compounds. This is Ureide permease 3 from Arabidopsis thaliana (Mouse-ear cress).